A 628-amino-acid chain; its full sequence is Forkhead box protein O (628 aa).

Disordered stretches follow at residues 39–77 (RARS…DSQQ), 182–205 (KSVR…RAKK), 217–269 (GLND…RLSP), 316–359 (QQQG…APGY), and 389–415 (NSVT…YSNV). Position 44 is a phosphothreonine; by PKB/AKT1 (Thr44). Polar residues predominate over residues 63–77 (TKASNQQLAPGDSQQ). Ser75 carries the post-translational modification Phosphoserine. Residues 95-201 (WGNLSYADLI…ETSRYEKRRG (107 aa)) constitute a DNA-binding region (fork-head). Phosphoserine; by PKB/AKT1 is present on Ser190. 2 stretches are compositionally biased toward polar residues: residues 221 to 230 (ATPSPSSSVS) and 256 to 265 (RASSNASSCG). Ser259 bears the Phosphoserine; by PKB/AKT1 mark. Ser262, Ser263, and Ser268 each carry phosphoserine. Residues 328–337 (SQPPPPPYQP) are compositionally biased toward pro residues. Residues 338–351 (PQHQQAQQQQSPYA) are compositionally biased toward low complexity. Residues 402–414 (SEPSSDSLNTYSN) are compositionally biased toward polar residues.

In terms of assembly, interacts with melt.

It is found in the cytoplasm. It localises to the nucleus. In terms of biological role, transcription factor involved in the regulation of the insulin signaling pathway. Consistently activates both the downstream target Thor\d4EBP and the feedback control target InR. Involved in negative regulation of the cell cycle, modulating cell growth and proliferation. In response to cellular stresses, such as nutrient deprivation or increased levels of reactive oxygen species, foxo is activated and inhibits growth through the action of target genes such as Thor. Foxo activated in the adult fat body can regulate lifespan in adults; an insulin peptide itself may function as one secondary messenger of insulin-regulated aging. Also regulates Lip4, homolog of human acid lipases, thereby acting as a key modulator of lipid metabolism by insulin signaling and integrates insulin responses to glucose and lipid homeostasis. The protein is Forkhead box protein O of Drosophila yakuba (Fruit fly).